Here is a 724-residue protein sequence, read N- to C-terminus: MSKMLYTLGGWVARNRIKAICAWIVVLVAAIGLAVTLKPSFSEDMSIPDTPSEKAMDVIQKEFPHGPDKGSIRVIFGAGDGEKLTGKPAKKAIEDTFKEISKDDSVDSIASPFVTGTIAKDGTVAYADIQYKSSADDIKDYSIKHLKDSLKMADDEGLQTELSGDVPGAEMEIGGVSEIVGIILAFVVLAITFGSLLIAGLPILTALIGLGVSIGLVLIGTQVFDIASVSLSLAGMIGLAVGIDYALFIFTKHRQFLGEGIQKNESIARAVGTAGSAVVFAGLTVIVALCGLTVVNIPFMSAMGLTAGLSVLMAVLASITLVPAVLSIAGKRMIPKSNKKIEKQSTETNVWGRFVTKNPIMLSVCSILILIVISIPSMHLELGLPDAGMKAKDNPDRRAYDLLAEGFGEGFNGQLTIVADATNATENKAEAFADAVKEIKGLDHVASVTPAMPNKEGNFAIITVVPETGPNDVTTKDLVHDVRSLSDKNGVDLLVTGSTAVNIDISDRLNDAIPVFAVLIVGFAFVLLTIVFRSLLVPLVAVAGFMLTMTATLGICVFVLQDGNLIDFFKIPEKGPILAFLPILSIGILFGLAMDYQVFLVSRMREEYVKTNNPVQAIQAGLKHSGPVVTAAGLIMIFVFAGFIFAGEASIKANGLALSFGVLFDAFIVRMTLIPSVMKLMGNAAWYLPKWLDKIIPNVDIEGHQLTKEIQPEIDHEQKKQISV.

12 helical membrane-spanning segments follow: residues 17 to 37 (IKAI…AVTL), 179 to 199 (IVGI…LLIA), 200 to 220 (GLPI…VLIG), 231 to 251 (LSLA…FIFT), 277 to 297 (AVVF…VVNI), 309 to 329 (LSVL…LSIA), 360 to 380 (IMLS…SMHL), 512 to 532 (AIPV…TIVF), 539 to 559 (LVAV…CVFV), 575 to 595 (GPIL…LAMD), 627 to 647 (PVVT…IFAG), and 655 to 675 (GLAL…TLIP).

This sequence belongs to the resistance-nodulation-cell division (RND) (TC 2.A.6) family. MmpL subfamily.

It is found in the cell membrane. The polypeptide is Membrane protein YdfJ (ydfJ) (Bacillus subtilis (strain 168)).